Here is a 669-residue protein sequence, read N- to C-terminus: UvrABC system protein B (669 aa).

The Helicase ATP-binding domain maps to 26 to 414; it reads EGLEDGLAHQ…SGDVVEQVVR (389 aa). 39–46 provides a ligand contact to ATP; that stretch reads GVTGSGKT. The short motif at 92–115 is the Beta-hairpin element; it reads YYDYYQPEAYVPSSDTFIEKDASV. The Helicase C-terminal domain maps to 431-597; it reads QVDDLLSEIR…GLNKKINDIL (167 aa). The 36-residue stretch at 629–664 folds into the UVR domain; sequence ESKIRELEAKMYQHAQDLEFEQAASVRDQVQALREQ.

The protein belongs to the UvrB family. Forms a heterotetramer with UvrA during the search for lesions. Interacts with UvrC in an incision complex.

It is found in the cytoplasm. In terms of biological role, the UvrABC repair system catalyzes the recognition and processing of DNA lesions. A damage recognition complex composed of 2 UvrA and 2 UvrB subunits scans DNA for abnormalities. Upon binding of the UvrA(2)B(2) complex to a putative damaged site, the DNA wraps around one UvrB monomer. DNA wrap is dependent on ATP binding by UvrB and probably causes local melting of the DNA helix, facilitating insertion of UvrB beta-hairpin between the DNA strands. Then UvrB probes one DNA strand for the presence of a lesion. If a lesion is found the UvrA subunits dissociate and the UvrB-DNA preincision complex is formed. This complex is subsequently bound by UvrC and the second UvrB is released. If no lesion is found, the DNA wraps around the other UvrB subunit that will check the other stand for damage. The polypeptide is UvrABC system protein B (Photorhabdus laumondii subsp. laumondii (strain DSM 15139 / CIP 105565 / TT01) (Photorhabdus luminescens subsp. laumondii)).